The chain runs to 161 residues: Cyclic pyranopterin monophosphate synthase (161 aa).

Substrate contacts are provided by residues 75–77 (LCH) and 113–114 (ME). The active site involves Asp128.

This sequence belongs to the MoaC family. In terms of assembly, homohexamer; trimer of dimers.

The catalysed reaction is (8S)-3',8-cyclo-7,8-dihydroguanosine 5'-triphosphate = cyclic pyranopterin phosphate + diphosphate. It functions in the pathway cofactor biosynthesis; molybdopterin biosynthesis. Its function is as follows. Catalyzes the conversion of (8S)-3',8-cyclo-7,8-dihydroguanosine 5'-triphosphate to cyclic pyranopterin monophosphate (cPMP). This chain is Cyclic pyranopterin monophosphate synthase, found in Edwardsiella ictaluri (strain 93-146).